We begin with the raw amino-acid sequence, 332 residues long: Glycerol-3-phosphate dehydrogenase [NAD(P)+] (332 aa).

NADPH contacts are provided by Ser11, Trp12, Arg32, Arg33, and Lys106. 2 residues coordinate sn-glycerol 3-phosphate: Lys106 and Gly136. Ala140 contacts NADPH. The sn-glycerol 3-phosphate site is built by Lys191, Asp244, Ser254, Arg255, and Asn256. Lys191 acts as the Proton acceptor in catalysis. Arg255 is an NADPH binding site. NADPH is bound by residues Val280 and Glu282.

The protein belongs to the NAD-dependent glycerol-3-phosphate dehydrogenase family.

The protein resides in the cytoplasm. It carries out the reaction sn-glycerol 3-phosphate + NAD(+) = dihydroxyacetone phosphate + NADH + H(+). It catalyses the reaction sn-glycerol 3-phosphate + NADP(+) = dihydroxyacetone phosphate + NADPH + H(+). It functions in the pathway membrane lipid metabolism; glycerophospholipid metabolism. Functionally, catalyzes the reduction of the glycolytic intermediate dihydroxyacetone phosphate (DHAP) to sn-glycerol 3-phosphate (G3P), the key precursor for phospholipid synthesis. This chain is Glycerol-3-phosphate dehydrogenase [NAD(P)+], found in Corynebacterium urealyticum (strain ATCC 43042 / DSM 7109).